A 72-amino-acid polypeptide reads, in one-letter code: Translation initiation factor IF-1 (72 aa).

Residues 1–72 (MAKDDVIEVE…TRGRITYRYK (72 aa)) form the S1-like domain. Residue Tyr-60 is modified to Phosphotyrosine.

The protein belongs to the IF-1 family. In terms of assembly, component of the 30S ribosomal translation pre-initiation complex which assembles on the 30S ribosome in the order IF-2 and IF-3, IF-1 and N-formylmethionyl-tRNA(fMet); mRNA recruitment can occur at any time during PIC assembly.

It is found in the cytoplasm. Its function is as follows. One of the essential components for the initiation of protein synthesis. Stabilizes the binding of IF-2 and IF-3 on the 30S subunit to which N-formylmethionyl-tRNA(fMet) subsequently binds. Helps modulate mRNA selection, yielding the 30S pre-initiation complex (PIC). Upon addition of the 50S ribosomal subunit IF-1, IF-2 and IF-3 are released leaving the mature 70S translation initiation complex. In Oceanobacillus iheyensis (strain DSM 14371 / CIP 107618 / JCM 11309 / KCTC 3954 / HTE831), this protein is Translation initiation factor IF-1.